We begin with the raw amino-acid sequence, 169 residues long: Ribosome-binding factor A (169 aa).

The tract at residues 124 to 169 (AGAKHAGDADPYKSDIPEDVEIDEDDFDEEDEDLIDDEELDEDGNK) is disordered. Positions 128–139 (HAGDADPYKSDI) are enriched in basic and acidic residues. Over residues 140–169 (PEDVEIDEDDFDEEDEDLIDDEELDEDGNK) the composition is skewed to acidic residues.

This sequence belongs to the RbfA family. Monomer. Binds 30S ribosomal subunits, but not 50S ribosomal subunits or 70S ribosomes.

It is found in the cytoplasm. In terms of biological role, one of several proteins that assist in the late maturation steps of the functional core of the 30S ribosomal subunit. Associates with free 30S ribosomal subunits (but not with 30S subunits that are part of 70S ribosomes or polysomes). Required for efficient processing of 16S rRNA. May interact with the 5'-terminal helix region of 16S rRNA. This Arthrobacter sp. (strain FB24) protein is Ribosome-binding factor A.